A 277-amino-acid chain; its full sequence is Caspase-3 (277 aa).

Methionine 1 is modified (N-acetylmethionine). 2 propeptides span residues 1–9 (MENTENSVD) and 10–28 (SKSI…KSVD). A compositionally biased stretch (polar residues) spans 1–10 (MENTENSVDS). The interval 1–25 (MENTENSVDSKSIKNSEPKIIHGSK) is disordered. Lysine 11 is modified (N6-acetyllysine). The segment covering 11–20 (KSIKNSEPKI) has biased composition (basic and acidic residues). Serine 26 carries the post-translational modification Phosphoserine. Residues histidine 121 and cysteine 163 contribute to the active site. Cysteine 163 is subject to S-nitrosocysteine; in inhibited form.

Belongs to the peptidase C14A family. In terms of assembly, heterotetramer that consists of two anti-parallel arranged heterodimers, each one formed by a 17 kDa (p17) and a 12 kDa (p12) subunit. Interacts with BIRC6/bruce. Post-translationally, cleavage by granzyme B, caspase-6, caspase-8 and caspase-10 generates the two active subunits. Additional processing of the propeptides is likely due to the autocatalytic activity of the activated protease. Active heterodimers between the small subunit of caspase-7 protease and the large subunit of caspase-3 also occur and vice versa. S-nitrosylated on its catalytic site cysteine in unstimulated cell lines and denitrosylated upon activation of the Fas apoptotic pathway, associated with an increase in intracellular caspase activity. Fas therefore activates caspase-3 not only by inducing the cleavage of the caspase zymogen to its active subunits, but also by stimulating the denitrosylation of its active site thiol. In terms of processing, ubiquitinated by BIRC6; this activity is inhibited by DIABLO/SMAC.

It is found in the cytoplasm. It catalyses the reaction Strict requirement for an Asp residue at positions P1 and P4. It has a preferred cleavage sequence of Asp-Xaa-Xaa-Asp-|- with a hydrophobic amino-acid residue at P2 and a hydrophilic amino-acid residue at P3, although Val or Ala are also accepted at this position.. Inhibited by BIRC6; following inhibition of BIRC6-caspase binding by DIABLO/SMAC, BIRC6 is subjected to caspase cleavage, leading to an increase in active caspases. Functionally, involved in the activation cascade of caspases responsible for apoptosis execution. At the onset of apoptosis, it proteolytically cleaves poly(ADP-ribose) polymerase PARP1 at a '216-Asp-|-Gly-217' bond. Cleaves and activates sterol regulatory element binding proteins (SREBPs) between the basic helix-loop-helix leucine zipper domain and the membrane attachment domain. Cleaves and activates caspase-6, -7 and -9 (CASP6, CASP7 and CASP9, respectively). Cleaves and inactivates interleukin-18 (IL18). Triggers cell adhesion in sympathetic neurons through RET cleavage. Cleaves IL-1 beta between an Asp and an Ala, releasing the mature cytokine which is involved in a variety of inflammatory processes. Cleaves and inhibits serine/threonine-protein kinase AKT1 in response to oxidative stress. Acts as an inhibitor of type I interferon production during virus-induced apoptosis by mediating cleavage of antiviral proteins CGAS, IRF3 and MAVS, thereby preventing cytokine overproduction. Also involved in pyroptosis by mediating cleavage and activation of gasdermin-E (GSDME). Cleaves XRCC4 and phospholipid scramblase proteins XKR4, XKR8 and XKR9, leading to promote phosphatidylserine exposure on apoptotic cell surface. Cleaves BIRC6 following inhibition of BIRC6-caspase binding by DIABLO/SMAC. This chain is Caspase-3 (CASP3), found in Saimiri boliviensis boliviensis (Bolivian squirrel monkey).